The following is a 396-amino-acid chain: Putative peptide chain release factor 1, mitochondrial (396 aa).

Position 270 is an N5-methylglutamine (glutamine 270).

Belongs to the prokaryotic/mitochondrial release factor family. Post-translationally, methylation of glutamine in the GGQ triplet is conserved from bacteria to mammals.

It localises to the mitochondrion. This is Putative peptide chain release factor 1, mitochondrial from Schizosaccharomyces pombe (strain 972 / ATCC 24843) (Fission yeast).